The sequence spans 247 residues: MASPLTRFLSLNLLLLGESIILGSGEAKPQAPELRIFPKKMDAELGQKVDLVCEVLGSVSQGCSWLFQNSSSKLPQPTFVVYMASSHNKITWDEKLNSSKLFSAMRDTNNKYVLTLNKFSKENEGYYFCSVISNSVMYFSSVVPVLQKVNSTTTKPVLRTPSPVHPTGTSQPQRPEDCRPRGSVKGTGLDFACDIYIWAPLAGICVALLLSLIITLICYHRSRKRVCKCPRPLVRQEGKPRPSEKIV.

Residues 1 to 27 (MASPLTRFLSLNLLLLGESIILGSGEA) form the signal peptide. Positions 28 to 139 (KPQAPELRIF…SVISNSVMYF (112 aa)) constitute an Ig-like V-type domain. Over 28-196 (KPQAPELRIF…TGLDFACDIY (169 aa)) the chain is Extracellular. Residues Cys-53 and Cys-129 are joined by a disulfide bond. Residues Asn-69, Asn-97, and Asn-150 are each glycosylated (N-linked (GlcNAc...) asparagine). The interval 156-182 (PVLRTPSPVHPTGTSQPQRPEDCRPRG) is disordered. The chain crosses the membrane as a helical span at residues 197–217 (IWAPLAGICVALLLSLIITLI). Topologically, residues 218–247 (CYHRSRKRVCKCPRPLVRQEGKPRPSEKIV) are cytoplasmic.

Forms disulfide-linked heterodimers with CD8B at the cell surface. Also forms homodimers in several cell types including NK-cells or peripheral blood T-lymphocytes. Interacts with the MHC class I HLA-A/B2M dimer. Interacts with LCK in a zinc-dependent manner. In terms of processing, palmitoylated, but association with CD8B seems to be more important for the enrichment of CdD8A in lipid rafts. Phosphorylated in cytotoxic T-lymphocytes (CTLs) following activation.

The protein localises to the cell membrane. Integral membrane glycoprotein that plays an essential role in the immune response and serves multiple functions in responses against both external and internal offenses. In T-cells, functions primarily as a coreceptor for MHC class I molecule:peptide complex. The antigens presented by class I peptides are derived from cytosolic proteins while class II derived from extracellular proteins. Interacts simultaneously with the T-cell receptor (TCR) and the MHC class I proteins presented by antigen presenting cells (APCs). In turn, recruits the Src kinase LCK to the vicinity of the TCR-CD3 complex. LCK then initiates different intracellular signaling pathways by phosphorylating various substrates ultimately leading to lymphokine production, motility, adhesion and activation of cytotoxic T-lymphocytes (CTLs). This mechanism enables CTLs to recognize and eliminate infected cells and tumor cells. In NK-cells, the presence of CD8A homodimers at the cell surface provides a survival mechanism allowing conjugation and lysis of multiple target cells. CD8A homodimer molecules also promote the survival and differentiation of activated lymphocytes into memory CD8 T-cells. The protein is T-cell surface glycoprotein CD8 alpha chain (Cd8a) of Mus musculus (Mouse).